Consider the following 338-residue polypeptide: POU domain, class 4, transcription factor 3 (338 aa).

The POU-IV box motif lies at 56–65; it reads RAEALAAVDI. One can recognise a POU-specific domain in the interval 179 to 256; it reads DVESDPRELE…VLQAWLEEAE (78 aa). Residues 274–333 constitute a DNA-binding region (homeobox); it reads RKRKRTSIAAPEKRSLEAYFAIQPRPSSEKIAAIAEKLDLKKNVVRVWFCNQRQKQKRMK.

The protein belongs to the POU transcription factor family. Class-4 subfamily. Interacts with ISL1. Brain.

The protein resides in the nucleus. It is found in the cytoplasm. Functionally, acts as a transcriptional activator. Acts by binding to sequences related to the consensus octamer motif 5'-ATGCAAAT-3' in the regulatory regions of its target genes. Involved in the auditory system development, required for terminal differentiation of hair cells in the inner ear. In Mus musculus (Mouse), this protein is POU domain, class 4, transcription factor 3.